Consider the following 113-residue polypeptide: MTIAKSVLLFILAAVAEIGGAWLVWQAVREGRAWWWAGLGIIALGLYGFVATLQPDAHFGRILAAYGGVFVAGSLVWGMVFDGFRPDRWDVIGSVICLVGVAVIMFAPRGTTS.

4 helical membrane passes run 7–27, 33–53, 62–82, and 91–111; these read VLLF…VWQA, AWWW…VATL, ILAA…MVFD, and VIGS…PRGT.

Belongs to the UPF0060 family.

The protein localises to the cell membrane. This chain is UPF0060 membrane protein Arth_4423, found in Arthrobacter sp. (strain FB24).